We begin with the raw amino-acid sequence, 322 residues long: Formimidoylglutamase (322 aa).

Positions 130, 156, 158, 160, 245, and 247 each coordinate Mn(2+).

It belongs to the arginase family. Requires Mn(2+) as cofactor.

The catalysed reaction is N-formimidoyl-L-glutamate + H2O = formamide + L-glutamate. The protein operates within amino-acid degradation; L-histidine degradation into L-glutamate; L-glutamate from N-formimidoyl-L-glutamate (hydrolase route): step 1/1. Its function is as follows. Catalyzes the conversion of N-formimidoyl-L-glutamate to L-glutamate and formamide. This Lysinibacillus sphaericus (strain C3-41) protein is Formimidoylglutamase.